A 241-amino-acid chain; its full sequence is ATP synthase subunit a (241 aa).

A run of 7 helical transmembrane segments spans residues 29–49, 86–106, 114–134, 144–164, 177–197, 200–220, and 221–241; these read NSSL…LLGV, IPLV…GMLP, HVIV…IVGF, ILLP…IKLF, LAAN…FIMN, LILT…EVFV, and AILQ…DAVK.

Belongs to the ATPase A chain family. F-type ATPases have 2 components, CF(1) - the catalytic core - and CF(0) - the membrane proton channel. CF(1) has five subunits: alpha(3), beta(3), gamma(1), delta(1), epsilon(1). CF(0) has three main subunits: a(1), b(2) and c(9-12). The alpha and beta chains form an alternating ring which encloses part of the gamma chain. CF(1) is attached to CF(0) by a central stalk formed by the gamma and epsilon chains, while a peripheral stalk is formed by the delta and b chains.

The protein resides in the cell membrane. Its function is as follows. Key component of the proton channel; it plays a direct role in the translocation of protons across the membrane. This Wolbachia sp. subsp. Brugia malayi (strain TRS) protein is ATP synthase subunit a.